Reading from the N-terminus, the 527-residue chain is Amine oxidase [flavin-containing] A (527 aa).

Met-1 carries the N-acetylmethionine modification. Topologically, residues 1–497 (MENQEKASIA…HTFWERNLPS (497 aa)) are cytoplasmic. Phosphoserine is present on Ser-383. Position 406 is an S-8alpha-FAD cysteine (Cys-406). The helical; Anchor for type IV membrane protein transmembrane segment at 498 to 518 (VSGLLKIIGFSTSVTALGFVL) threads the bilayer. Residues 519–527 (YKYKLLPRS) are Mitochondrial intermembrane-facing. An interaction with membrane phospholipid headgroups region spans residues 520-522 (KYK).

Belongs to the flavin monoamine oxidase family. As to quaternary structure, monomer, homo- or heterodimer (containing two subunits of similar size). Each subunit contains a covalently bound flavin. Enzymatically active as monomer. FAD is required as a cofactor.

The protein resides in the mitochondrion outer membrane. The enzyme catalyses a secondary aliphatic amine + O2 + H2O = a primary amine + an aldehyde + H2O2. It catalyses the reaction a primary methyl amine + O2 + H2O = an aldehyde + H2O2 + NH4(+). The catalysed reaction is (R)-adrenaline + O2 + H2O = (R)-3,4-dihydroxymandelaldehyde + methylamine + H2O2. It carries out the reaction dopamine + O2 + H2O = 3,4-dihydroxyphenylacetaldehyde + H2O2 + NH4(+). The enzyme catalyses tyramine + O2 + H2O = (4-hydroxyphenyl)acetaldehyde + H2O2 + NH4(+). It catalyses the reaction (R)-noradrenaline + O2 + H2O = (R)-3,4-dihydroxymandelaldehyde + H2O2 + NH4(+). The catalysed reaction is serotonin + O2 + H2O = (5-hydroxyindol-3-yl)acetaldehyde + H2O2 + NH4(+). It carries out the reaction kynuramine + O2 + H2O = 3-(2-aminophenyl)-3-oxopropanal + H2O2 + NH4(+). The enzyme catalyses tryptamine + O2 + H2O = indole-3-acetaldehyde + H2O2 + NH4(+). It catalyses the reaction 2-phenylethylamine + O2 + H2O = 2-phenylacetaldehyde + H2O2 + NH4(+). In terms of biological role, catalyzes the oxidative deamination of primary and some secondary amine such as neurotransmitters, with concomitant reduction of oxygen to hydrogen peroxide and has important functions in the metabolism of neuroactive and vasoactive amines in the central nervous system and peripheral tissues. Preferentially oxidizes serotonin. Also catalyzes the oxidative deamination of kynuramine to 3-(2-aminophenyl)-3-oxopropanal that can spontaneously condense to 4-hydroxyquinoline. This Pongo abelii (Sumatran orangutan) protein is Amine oxidase [flavin-containing] A.